The primary structure comprises 328 residues: Cytochrome c biogenesis protein CcsA (328 aa).

8 helical membrane-spanning segments follow: residues 15-35 (FLVL…PSIP), 36-56 (LLPG…AALL), 68-88 (ISNL…VHLI), 97-117 (LVGV…TLSL), 142-162 (VMML…AFLI), 236-256 (VIGL…VWAN), 263-283 (WSWD…AAYL), and 297-317 (AILA…VNLL).

It belongs to the CcmF/CycK/Ccl1/NrfE/CcsA family. As to quaternary structure, may interact with ccs1.

The protein localises to the cellular thylakoid membrane. In terms of biological role, required during biogenesis of c-type cytochromes (cytochrome c6 and cytochrome f) at the step of heme attachment. The sequence is that of Cytochrome c biogenesis protein CcsA from Microcystis aeruginosa (strain NIES-843 / IAM M-2473).